The sequence spans 574 residues: Actin-binding protein wsp1 (574 aa).

Residues 19–130 form the WH1 domain; the sequence is IPKSTNKIIA…KKVLDKGCHP (112 aa). Disordered stretches follow at residues 144-186, 221-494, and 517-574; these read KGSS…ELLN, AGTP…IAEL, and KSRK…DEWD. Polar residues predominate over residues 149-158; it reads HAPNNSNIQP. Composition is skewed to pro residues over residues 230 to 240 and 251 to 260; these read PPIPPSIPSSR and PAPPPIPPPS. 2 stretches are compositionally biased toward low complexity: residues 297–306 and 324–335; these read SRVSAAALAA and KPPIGNGSSNSS. Residues 352-368 show a composition bias toward pro residues; the sequence is PLPPQGRSAPPPPPPRS. Ser386 bears the Phosphoserine mark. Pro residues predominate over residues 415–485; the sequence is PPVPTPPSLP…PPPAPAPAPA (71 aa). Positions 499–518 constitute a WH2 domain; the sequence is GRANLMASIRASGGMDLLKS. Residues 521–545 show a composition bias toward polar residues; sequence VSASPSVASTKTSNPPVEAPPSNNL. Positions 563-574 are enriched in acidic residues; sequence SDEEDEDDDEWD.

In terms of assembly, interacts with vrp1.

It is found in the cytoplasm. The protein localises to the cytoskeleton. Its function is as follows. Has a role in regulating actin assembly, so regulating polarized growth. In Schizosaccharomyces pombe (strain 972 / ATCC 24843) (Fission yeast), this protein is Actin-binding protein wsp1 (wsp1).